The primary structure comprises 362 residues: Flagellar P-ring protein (362 aa).

Residues 1–18 (MKHIALIVLYFLSFSVQA) form the signal peptide.

It belongs to the FlgI family. The basal body constitutes a major portion of the flagellar organelle and consists of four rings (L,P,S, and M) mounted on a central rod.

The protein localises to the periplasm. It is found in the bacterial flagellum basal body. Assembles around the rod to form the L-ring and probably protects the motor/basal body from shearing forces during rotation. This chain is Flagellar P-ring protein, found in Marinomonas sp. (strain MWYL1).